The chain runs to 57 residues: Large ribosomal subunit protein eL20 (57 aa).

This sequence belongs to the eukaryotic ribosomal protein eL20 family. As to quaternary structure, part of the 50S ribosomal subunit. Binds 23S rRNA.

The chain is Large ribosomal subunit protein eL20 from Natronomonas pharaonis (strain ATCC 35678 / DSM 2160 / CIP 103997 / JCM 8858 / NBRC 14720 / NCIMB 2260 / Gabara) (Halobacterium pharaonis).